Reading from the N-terminus, the 146-residue chain is Large ribosomal subunit protein uL15 (146 aa).

The disordered stretch occupies residues 1-56 (MKLHELKAAEGANKASKRVGRGTGSGLGKTSGKGQNGQNSRSGGGVRPGFEGGQMP). Composition is skewed to gly residues over residues 21-35 (RGTG…GKGQ) and 42-52 (SGGGVRPGFEG).

The protein belongs to the universal ribosomal protein uL15 family. As to quaternary structure, part of the 50S ribosomal subunit.

Functionally, binds to the 23S rRNA. The chain is Large ribosomal subunit protein uL15 from Clostridium botulinum (strain Langeland / NCTC 10281 / Type F).